Consider the following 80-residue polypeptide: Putative membrane protein insertion efficiency factor (80 aa).

This sequence belongs to the UPF0161 family.

The protein localises to the cell membrane. Functionally, could be involved in insertion of integral membrane proteins into the membrane. The protein is Putative membrane protein insertion efficiency factor of Shouchella clausii (strain KSM-K16) (Alkalihalobacillus clausii).